The following is a 273-amino-acid chain: Dermonecrotic toxin LapSicTox-alphaIB1aiv (273 aa).

The active site involves His5. Mg(2+) is bound by residues Glu25 and Asp27. The active-site Nucleophile is the His41. Intrachain disulfides connect Cys45-Cys51 and Cys47-Cys190. Position 85 (Asp85) interacts with Mg(2+). A glycan (N-linked (GlcNAc...) asparagine) is linked at Asn250.

This sequence belongs to the arthropod phospholipase D family. Class II subfamily. It depends on Mg(2+) as a cofactor. As to expression, expressed by the venom gland.

The protein resides in the secreted. The catalysed reaction is an N-(acyl)-sphingosylphosphocholine = an N-(acyl)-sphingosyl-1,3-cyclic phosphate + choline. The enzyme catalyses an N-(acyl)-sphingosylphosphoethanolamine = an N-(acyl)-sphingosyl-1,3-cyclic phosphate + ethanolamine. It catalyses the reaction a 1-acyl-sn-glycero-3-phosphocholine = a 1-acyl-sn-glycero-2,3-cyclic phosphate + choline. It carries out the reaction a 1-acyl-sn-glycero-3-phosphoethanolamine = a 1-acyl-sn-glycero-2,3-cyclic phosphate + ethanolamine. Functionally, dermonecrotic toxins cleave the phosphodiester linkage between the phosphate and headgroup of certain phospholipids (sphingolipid and lysolipid substrates), forming an alcohol (often choline) and a cyclic phosphate. This toxin acts on sphingomyelin (SM). It may also act on ceramide phosphoethanolamine (CPE), lysophosphatidylcholine (LPC) and lysophosphatidylethanolamine (LPE), but not on lysophosphatidylserine (LPS), and lysophosphatidylglycerol (LPG). It acts by transphosphatidylation, releasing exclusively cyclic phosphate products as second products. Induces dermonecrosis, hemolysis, increased vascular permeability, edema, inflammatory response, and platelet aggregation. This chain is Dermonecrotic toxin LapSicTox-alphaIB1aiv, found in Loxosceles apachea (Apache recluse spider).